A 426-amino-acid polypeptide reads, in one-letter code: Gamma-glutamyl phosphate reductase (426 aa).

It belongs to the gamma-glutamyl phosphate reductase family.

The protein localises to the cytoplasm. It carries out the reaction L-glutamate 5-semialdehyde + phosphate + NADP(+) = L-glutamyl 5-phosphate + NADPH + H(+). It participates in amino-acid biosynthesis; L-proline biosynthesis; L-glutamate 5-semialdehyde from L-glutamate: step 2/2. Catalyzes the NADPH-dependent reduction of L-glutamate 5-phosphate into L-glutamate 5-semialdehyde and phosphate. The product spontaneously undergoes cyclization to form 1-pyrroline-5-carboxylate. This Paracidovorax citrulli (strain AAC00-1) (Acidovorax citrulli) protein is Gamma-glutamyl phosphate reductase.